Here is a 208-residue protein sequence, read N- to C-terminus: Uracil phosphoribosyltransferase (208 aa).

5-phospho-alpha-D-ribose 1-diphosphate-binding positions include arginine 78, arginine 103, and 130–138; that span reads DPMLATGGS. Uracil-binding positions include isoleucine 193 and 198–200; that span reads GDA. Aspartate 199 contacts 5-phospho-alpha-D-ribose 1-diphosphate.

Belongs to the UPRTase family. The cofactor is Mg(2+).

The enzyme catalyses UMP + diphosphate = 5-phospho-alpha-D-ribose 1-diphosphate + uracil. The protein operates within pyrimidine metabolism; UMP biosynthesis via salvage pathway; UMP from uracil: step 1/1. Allosterically activated by GTP. In terms of biological role, catalyzes the conversion of uracil and 5-phospho-alpha-D-ribose 1-diphosphate (PRPP) to UMP and diphosphate. In Shewanella denitrificans (strain OS217 / ATCC BAA-1090 / DSM 15013), this protein is Uracil phosphoribosyltransferase.